Reading from the N-terminus, the 269-residue chain is Hydroxyethylthiazole kinase (269 aa).

M41 contacts substrate. The ATP site is built by R117 and S165. A substrate-binding site is contributed by G192.

Belongs to the Thz kinase family. Mg(2+) is required as a cofactor.

The enzyme catalyses 5-(2-hydroxyethyl)-4-methylthiazole + ATP = 4-methyl-5-(2-phosphooxyethyl)-thiazole + ADP + H(+). The protein operates within cofactor biosynthesis; thiamine diphosphate biosynthesis; 4-methyl-5-(2-phosphoethyl)-thiazole from 5-(2-hydroxyethyl)-4-methylthiazole: step 1/1. In terms of biological role, catalyzes the phosphorylation of the hydroxyl group of 4-methyl-5-beta-hydroxyethylthiazole (THZ). The sequence is that of Hydroxyethylthiazole kinase from Actinobacillus succinogenes (strain ATCC 55618 / DSM 22257 / CCUG 43843 / 130Z).